Here is a 329-residue protein sequence, read N- to C-terminus: tRNA dimethylallyltransferase (329 aa).

Position 12–19 (12–19 (GPTSVGKT)) interacts with ATP. 14-19 (TSVGKT) is a binding site for substrate. The interaction with substrate tRNA stretch occupies residues 37–40 (DSRY). The segment at 306–329 (LREESDEGDVAVHQSGGGKEAPRA) is disordered. Over residues 320-329 (SGGGKEAPRA) the composition is skewed to gly residues.

This sequence belongs to the IPP transferase family. In terms of assembly, monomer. The cofactor is Mg(2+).

It catalyses the reaction adenosine(37) in tRNA + dimethylallyl diphosphate = N(6)-dimethylallyladenosine(37) in tRNA + diphosphate. In terms of biological role, catalyzes the transfer of a dimethylallyl group onto the adenine at position 37 in tRNAs that read codons beginning with uridine, leading to the formation of N6-(dimethylallyl)adenosine (i(6)A). The chain is tRNA dimethylallyltransferase from Thermomicrobium roseum (strain ATCC 27502 / DSM 5159 / P-2).